The primary structure comprises 116 residues: Large ribosomal subunit protein bL19 (116 aa).

The protein belongs to the bacterial ribosomal protein bL19 family.

Functionally, this protein is located at the 30S-50S ribosomal subunit interface and may play a role in the structure and function of the aminoacyl-tRNA binding site. In Chloroflexus aurantiacus (strain ATCC 29366 / DSM 635 / J-10-fl), this protein is Large ribosomal subunit protein bL19.